The sequence spans 75 residues: Small ribosomal subunit protein bS18 (75 aa).

It belongs to the bacterial ribosomal protein bS18 family. Part of the 30S ribosomal subunit. Forms a tight heterodimer with protein bS6.

Its function is as follows. Binds as a heterodimer with protein bS6 to the central domain of the 16S rRNA, where it helps stabilize the platform of the 30S subunit. The chain is Small ribosomal subunit protein bS18 from Yersinia enterocolitica serotype O:8 / biotype 1B (strain NCTC 13174 / 8081).